A 1362-amino-acid chain; its full sequence is Leptomycin B resistance protein pmd1 (1362 aa).

The segment at 1-45 is disordered; the sequence is MSLHSKKSTSTVKDNEHSLDLSIKSIPSNEKNFSTEKSENEASES. Over 1-91 the chain is Cytoplasmic; that stretch reads MSLHSKKSTS…RILSYADKWD (91 aa). Residues 33–45 show a composition bias toward basic and acidic residues; the sequence is FSTEKSENEASES. 6 helical membrane-spanning segments follow: residues 92 to 115, 138 to 162, 220 to 237, 244 to 264, 320 to 346, and 354 to 374; these read IMLQ…MSLV, TVDH…IYTV, LVFF…IAFI, LILS…VPFI, AIAM…WEGG, and LDVS…YSLA. The ABC transmembrane type-1 1 domain maps to 95 to 385; the sequence is QLAGTITGIG…ISPKMQSFVS (291 aa). Residues 375–788 are Cytoplasmic-facing; it reads NISPKMQSFV…LWFIHSFVRT (414 aa). Positions 420-665 constitute an ABC transporter 1 domain; sequence IELKNIRFVY…NGAYARLVEA (246 aa). 455–462 is an ATP binding site; that stretch reads GASGSGKS. The disordered stretch occupies residues 748-768; it reads LPPADVGELNEEPKKSKKSKK. 6 helical membrane passes run 789-809, 835-859, 916-935, 940-957, 1022-1040, and 1054-1072; these read MIEI…GAAY, VNVF…SNFA, LGTF…LSLA, LGLV…AGYY, GLFF…ALTF, and IVQF…QQAG. The 289-residue stretch at 795-1083 folds into the ABC transmembrane type-1 2 domain; that stretch reads LLIGILASMI…FFGYSADVTK (289 aa). Over 1073–1362 the chain is Cytoplasmic; that stretch reads QFFGYSADVT…LVVEQGLNKA (290 aa). An ABC transporter 2 domain is found at 1119-1356; sequence IEFRQVEFSY…RGRYYELVVE (238 aa). Residue 1154–1161 participates in ATP binding; it reads GSSGCGKS.

The protein belongs to the ABC transporter superfamily. ABCB family. Multidrug resistance exporter (TC 3.A.1.201) subfamily.

It is found in the membrane. Its function is as follows. May be a transmembrane transporter of the mating factor, namely P-factor or M-factor. Confers resistance to leptomycin B and to several other antifungal drugs. The chain is Leptomycin B resistance protein pmd1 (pmd1) from Schizosaccharomyces pombe (strain 972 / ATCC 24843) (Fission yeast).